Reading from the N-terminus, the 586-residue chain is Major facilitator superfamily domain-containing protein 6-like (586 aa).

2 helical membrane-spanning segments follow: residues 50–70 (TLMG…AFLA) and 78–98 (ALLI…VLVP). Residues 133-160 (AQESASSHPAKRTAEVEMPGFRNPPGES) form a disordered region. The next 9 helical transmembrane spans lie at 246–266 (FILS…LEQV), 287–307 (LWVW…ALVG), 326–346 (GYSV…IPIC), 361–381 (IVGG…VGAI), 400–420 (ELVM…LHPF), 433–455 (LVGL…WSWW), 456–476 (SVLP…WAVG), 499–519 (FYGS…MRFS), and 521–541 (AVLY…LLSI).

It belongs to the major facilitator superfamily. MFSD6 family.

It is found in the membrane. The chain is Major facilitator superfamily domain-containing protein 6-like (MFSD6L) from Homo sapiens (Human).